A 444-amino-acid polypeptide reads, in one-letter code: Glutamyl-tRNA(Gln) amidotransferase subunit D (444 aa).

In terms of domain architecture, Asparaginase/glutaminase spans 92 to 424 (SEIKIISTGG…EKIQNLMITN (333 aa)). Residues Thr102, Thr178, Asp179, and Lys257 contribute to the active site.

The protein belongs to the asparaginase 1 family. GatD subfamily. Heterodimer of GatD and GatE.

It carries out the reaction L-glutamyl-tRNA(Gln) + L-glutamine + ATP + H2O = L-glutaminyl-tRNA(Gln) + L-glutamate + ADP + phosphate + H(+). Functionally, allows the formation of correctly charged Gln-tRNA(Gln) through the transamidation of misacylated Glu-tRNA(Gln) in organisms which lack glutaminyl-tRNA synthetase. The reaction takes place in the presence of glutamine and ATP through an activated gamma-phospho-Glu-tRNA(Gln). The GatDE system is specific for glutamate and does not act on aspartate. The chain is Glutamyl-tRNA(Gln) amidotransferase subunit D from Saccharolobus solfataricus (strain ATCC 35092 / DSM 1617 / JCM 11322 / P2) (Sulfolobus solfataricus).